The following is a 233-amino-acid chain: MTIGIIGAMEEEVELLKNSMPSVEEIVIGGAKFYVGEIAGKEVVLLESGIGKVNAALGTTLMADRFKPEVIINTGSAGGMAEGLAVGDVIISDRLAYGDVDVTEFGYTYGQVPRMPAFYQGDAVLLKKAETIYREYFAASENKAVYGLVVTNDSFIMRPDQHETIRTFFPDVKAVEMEAAAIAQVAYQFDIPFLIIRAISDLANQEATISFDEFIHLAARQSATCIIELLKTI.

Glu12 acts as the Proton acceptor in catalysis. Substrate is bound by residues Gly78, Ile156, and 177-178; that span reads ME. Asp201 serves as the catalytic Proton donor.

This sequence belongs to the PNP/UDP phosphorylase family. MtnN subfamily.

The catalysed reaction is S-adenosyl-L-homocysteine + H2O = S-(5-deoxy-D-ribos-5-yl)-L-homocysteine + adenine. It catalyses the reaction S-methyl-5'-thioadenosine + H2O = 5-(methylsulfanyl)-D-ribose + adenine. It carries out the reaction 5'-deoxyadenosine + H2O = 5-deoxy-D-ribose + adenine. It functions in the pathway amino-acid biosynthesis; L-methionine biosynthesis via salvage pathway; S-methyl-5-thio-alpha-D-ribose 1-phosphate from S-methyl-5'-thioadenosine (hydrolase route): step 1/2. In terms of biological role, catalyzes the irreversible cleavage of the glycosidic bond in both 5'-methylthioadenosine (MTA) and S-adenosylhomocysteine (SAH/AdoHcy) to adenine and the corresponding thioribose, 5'-methylthioribose and S-ribosylhomocysteine, respectively. Also cleaves 5'-deoxyadenosine, a toxic by-product of radical S-adenosylmethionine (SAM) enzymes, into 5-deoxyribose and adenine. The chain is 5'-methylthioadenosine/S-adenosylhomocysteine nucleosidase from Listeria monocytogenes serotype 4b (strain F2365).